A 107-amino-acid polypeptide reads, in one-letter code: Apolipoprotein E (107 aa).

5 tandem repeats follow at residues 11-32, 33-54, 55-76, 77-98, and 99-107. The 5 X 22 AA approximate tandem repeats stretch occupies residues 11–107; it reads ALMDETMKEL…LRDVDDLQKR (97 aa). Methionine sulfoxide is present on M74. S78 is subject to Phosphoserine. Positions 89–99 are LDL and other lipoprotein receptors binding; that stretch reads HLRKLRKRLLR. 93-96 contributes to the heparin binding site; the sequence is LRKR.

It belongs to the apolipoprotein A1/A4/E family. As to quaternary structure, homotetramer. May interact with ABCA1; functionally associated with ABCA1 in the biogenesis of HDLs. May interact with APP/A4 amyloid-beta peptide; the interaction is extremely stable in vitro but its physiological significance is unclear. May interact with MAPT. May interact with MAP2. In the cerebrospinal fluid, interacts with secreted SORL1. Interacts with PMEL; this allows the loading of PMEL luminal fragment on ILVs to induce fibril nucleation. Post-translationally, APOE exists as multiple glycosylated and sialylated glycoforms within cells and in plasma. The extent of glycosylation and sialylation are tissue and context specific. Glycated in plasma VLDL. In terms of processing, phosphorylated by FAM20C in the extracellular medium.

The protein resides in the secreted. It localises to the extracellular space. Its subcellular location is the extracellular matrix. It is found in the extracellular vesicle. The protein localises to the endosome. The protein resides in the multivesicular body. Functionally, APOE is an apolipoprotein, a protein associating with lipid particles, that mainly functions in lipoprotein-mediated lipid transport between organs via the plasma and interstitial fluids. APOE is a core component of plasma lipoproteins and is involved in their production, conversion and clearance. Apolipoproteins are amphipathic molecules that interact both with lipids of the lipoprotein particle core and the aqueous environment of the plasma. As such, APOE associates with chylomicrons, chylomicron remnants, very low density lipoproteins (VLDL) and intermediate density lipoproteins (IDL) but shows a preferential binding to high-density lipoproteins (HDL). It also binds a wide range of cellular receptors including the LDL receptor/LDLR, the LDL receptor-related proteins LRP1, LRP2 and LRP8 and the very low-density lipoprotein receptor/VLDLR that mediate the cellular uptake of the APOE-containing lipoprotein particles. Finally, APOE also has a heparin-binding activity and binds heparan-sulfate proteoglycans on the surface of cells, a property that supports the capture and the receptor-mediated uptake of APOE-containing lipoproteins by cells. A main function of APOE is to mediate lipoprotein clearance through the uptake of chylomicrons, VLDLs, and HDLs by hepatocytes. APOE is also involved in the biosynthesis by the liver of VLDLs as well as their uptake by peripheral tissues ensuring the delivery of triglycerides and energy storage in muscle, heart and adipose tissues. By participating in the lipoprotein-mediated distribution of lipids among tissues, APOE plays a critical role in plasma and tissues lipid homeostasis. APOE is also involved in two steps of reverse cholesterol transport, the HDLs-mediated transport of cholesterol from peripheral tissues to the liver, and thereby plays an important role in cholesterol homeostasis. First, it is functionally associated with ABCA1 in the biogenesis of HDLs in tissues. Second, it is enriched in circulating HDLs and mediates their uptake by hepatocytes. APOE also plays an important role in lipid transport in the central nervous system, regulating neuron survival and sprouting. This chain is Apolipoprotein E (APOE), found in Saimiri sciureus (Common squirrel monkey).